Consider the following 180-residue polypeptide: Pro-glucagon (180 aa).

Residues 1–20 form the signal peptide; that stretch reads MKTIYFVAGLFVMLVQGSWQ. Residues 25–59 form a disordered region; sequence NTEEKSRSFPAPQTDPLDDPDQMTEDKRHSQGTFT. Phosphoserine is present on serine 54. A propeptide spanning residues 84-89 is cleaved from the precursor; the sequence is NKNNIA. Residues serine 105 and serine 108 each carry the phosphoserine modification. Arginine amide is present on arginine 127. Residues 131-145 constitute a propeptide that is removed on maturation; the sequence is DFPEEVTIVEELRRR. Phosphoserine occurs at positions 150 and 152.

Belongs to the glucagon family. In terms of processing, proglucagon is post-translationally processed in a tissue-specific manner in pancreatic A cells and intestinal L cells. In pancreatic A cells, the major bioactive hormone is glucagon cleaved by PCSK2/PC2. In the intestinal L cells PCSK1/PC1 liberates GLP-1, GLP-2, glicentin and oxyntomodulin. GLP-1 is further N-terminally truncated by post-translational processing in the intestinal L cells resulting in GLP-1(7-37) GLP-1-(7-36)amide. The C-terminal amidation is neither important for the metabolism of GLP-1 nor for its effects on the endocrine pancreas. Glucagon is secreted in the A cells of the islets of Langerhans. GLP-1, GLP-2, oxyntomodulin and glicentin are secreted from enteroendocrine cells throughout the gastrointestinal tract. GLP-1 and GLP-2 are also secreted in selected neurons in the brain.

The protein resides in the secreted. Plays a key role in glucose metabolism and homeostasis. Regulates blood glucose by increasing gluconeogenesis and decreasing glycolysis. A counterregulatory hormone of insulin, raises plasma glucose levels in response to insulin-induced hypoglycemia. Plays an important role in initiating and maintaining hyperglycemic conditions in diabetes. Functionally, potent stimulator of glucose-dependent insulin release. Also stimulates insulin release in response to IL6. Plays important roles on gastric motility and the suppression of plasma glucagon levels. May be involved in the suppression of satiety and stimulation of glucose disposal in peripheral tissues, independent of the actions of insulin. Has growth-promoting activities on intestinal epithelium. May also regulate the hypothalamic pituitary axis (HPA) via effects on LH, TSH, CRH, oxytocin, and vasopressin secretion. Increases islet mass through stimulation of islet neogenesis and pancreatic beta cell proliferation. Inhibits beta cell apoptosis. In terms of biological role, stimulates intestinal growth and up-regulates villus height in the small intestine, concomitant with increased crypt cell proliferation and decreased enterocyte apoptosis. The gastrointestinal tract, from the stomach to the colon is the principal target for GLP-2 action. Plays a key role in nutrient homeostasis, enhancing nutrient assimilation through enhanced gastrointestinal function, as well as increasing nutrient disposal. Stimulates intestinal glucose transport and decreases mucosal permeability. Its function is as follows. Significantly reduces food intake. Inhibits gastric emptying in humans. Suppression of gastric emptying may lead to increased gastric distension, which may contribute to satiety by causing a sensation of fullness. May modulate gastric acid secretion and the gastro-pyloro-duodenal activity. May play an important role in intestinal mucosal growth in the early period of life. The protein is Pro-glucagon (GCG) of Sus scrofa (Pig).